The primary structure comprises 51 residues: Defensin-like protein 1 (51 aa).

At Gln1 the chain carries Pyrrolidone carboxylic acid. Disulfide bonds link Cys4-Cys51, Cys15-Cys36, Cys21-Cys45, and Cys25-Cys47.

In terms of assembly, forms oligomers in its native state.

Possesses antifungal activity sensitive to inorganic cations. This Sinapis alba (White mustard) protein is Defensin-like protein 1.